A 1358-amino-acid chain; its full sequence is DNA-directed RNA polymerase subunit beta (1358 aa).

It belongs to the RNA polymerase beta chain family. As to quaternary structure, the RNAP catalytic core consists of 2 alpha, 1 beta, 1 beta' and 1 omega subunit. When a sigma factor is associated with the core the holoenzyme is formed, which can initiate transcription.

It carries out the reaction RNA(n) + a ribonucleoside 5'-triphosphate = RNA(n+1) + diphosphate. DNA-dependent RNA polymerase catalyzes the transcription of DNA into RNA using the four ribonucleoside triphosphates as substrates. This Francisella tularensis subsp. holarctica (strain FTNF002-00 / FTA) protein is DNA-directed RNA polymerase subunit beta.